The sequence spans 76 residues: Defensin-like protein 155 (76 aa).

A signal peptide spans 1-27 (MAKISCSYLLILMLALSVFSVVEKAKG). Cystine bridges form between Cys31–Cys76, Cys40–Cys59, Cys45–Cys70, and Cys49–Cys72.

Belongs to the DEFL family.

It localises to the secreted. The sequence is that of Defensin-like protein 155 (LCR36) from Arabidopsis thaliana (Mouse-ear cress).